The primary structure comprises 403 residues: Octaketide synthase 1 (403 aa).

Residue cysteine 174 is part of the active site. CoA-binding positions include serine 281 and 318-321; that span reads GGRA.

The protein belongs to the thiolase-like superfamily. Chalcone/stilbene synthases family. In terms of assembly, homodimer.

It participates in secondary metabolite biosynthesis; flavonoid biosynthesis. In terms of biological role, catalyzes the iterative condensations of 8 molecules of malonyl-CoA to produce aromatic octaketides, SEK4 and SEK4b, the products of the minimal polyketide synthase for the benzoisochromanequinone actinorhodin. May be involved in the biosynthesis of the octaketide barbaloin. The protein is Octaketide synthase 1 of Aloe arborescens (Kidachi aloe).